Here is a 493-residue protein sequence, read N- to C-terminus: Arginine decarboxylase (493 aa).

Lysine 229 is subject to N6-(pyridoxal phosphate)lysine.

Belongs to the Orn/Lys/Arg decarboxylase class-I family. Requires pyridoxal 5'-phosphate as cofactor.

It is found in the cytoplasm. The catalysed reaction is L-arginine + H(+) = agmatine + CO2. The protein operates within amine and polyamine biosynthesis; agmatine biosynthesis; agmatine from L-arginine: step 1/1. Functionally, catalyzes the formation of agmatine from arginine. This is Arginine decarboxylase (speA) from Bacillus anthracis.